Consider the following 384-residue polypeptide: S-adenosylmethionine synthase (384 aa).

Position 16 (His16) interacts with ATP. Asp18 lines the Mg(2+) pocket. Position 44 (Glu44) interacts with K(+). Positions 57 and 100 each coordinate L-methionine. The segment at 100–110 (QSADIAMGVDE) is flexible loop. Residues 165–167 (DAK), Asp240, 246–247 (RK), Ala263, and Lys267 each bind ATP. Asp240 contributes to the L-methionine binding site. Lys271 contacts L-methionine.

This sequence belongs to the AdoMet synthase family. As to quaternary structure, homotetramer; dimer of dimers. It depends on Mg(2+) as a cofactor. K(+) is required as a cofactor.

The protein resides in the cytoplasm. The catalysed reaction is L-methionine + ATP + H2O = S-adenosyl-L-methionine + phosphate + diphosphate. Its pathway is amino-acid biosynthesis; S-adenosyl-L-methionine biosynthesis; S-adenosyl-L-methionine from L-methionine: step 1/1. Functionally, catalyzes the formation of S-adenosylmethionine (AdoMet) from methionine and ATP. The overall synthetic reaction is composed of two sequential steps, AdoMet formation and the subsequent tripolyphosphate hydrolysis which occurs prior to release of AdoMet from the enzyme. This is S-adenosylmethionine synthase from Cellvibrio japonicus (strain Ueda107) (Pseudomonas fluorescens subsp. cellulosa).